Here is a 444-residue protein sequence, read N- to C-terminus: Sperm-associated antigen 4 protein (444 aa).

The tract at residues 1 to 109 (MRRNPRPGSA…GGASEPSGSP (109 aa)) is disordered. Residues 19–36 (NFYSENSNSSHSATSGDS) are compositionally biased toward low complexity. A run of 2 helical transmembrane segments spans residues 137-159 (FLSLFFQVLSVFLSLVADGLVCV) and 166-188 (IRFLFTAVSLLSIFLAALWWGLL). Positions 204–241 (LSQYHHRVHSQGQQLQQLQAELSKLHKEVTSVRAAHSE) form a coiled coil. The region spanning 267–428 (GASIDLEKTS…YRVRAHGVRI (162 aa)) is the SUN domain.

As to quaternary structure, self-associates. Interacts with ODF1. May associate with microtubules. Interacts with SUN3 and SYNE1; suggesting the formation of a LINC complexs; a SUN domain-based heterotrimer of SPAG4 and SUN3 may associate with SYNE1. Interacts with SEPT12 and LMNB1; during spermatogenesis. Testis specific. Exclusively expressed in spermatids.

Its subcellular location is the membrane. It is found in the cytoplasm. The protein resides in the cytoskeleton. It localises to the flagellum axoneme. The protein localises to the nucleus envelope. Its subcellular location is the nucleus inner membrane. In terms of biological role, involved in spermatogenesis. Required for sperm head formation but not required to establish and maintain general polarity of the sperm head. Required for anchoring and organization of the manchette. Required for targeting of SUN3 and probably SYNE1 through a probable SUN1:SYNE3 LINC complex to the nuclear envelope and involved in accurate posterior sperm head localization of the complex. May anchor SUN3 the nuclear envelope. Involved in maintenance of the nuclear envelope integrity. May assist the organization and assembly of outer dense fibers (ODFs), a specific structure of the sperm tail. The sequence is that of Sperm-associated antigen 4 protein (Spag4) from Rattus norvegicus (Rat).